Here is a 644-residue protein sequence, read N- to C-terminus: 1-deoxy-D-xylulose-5-phosphate synthase (644 aa).

Residues His78 and 120 to 122 (GHA) contribute to the thiamine diphosphate site. Position 149 (Asp149) interacts with Mg(2+). Thiamine diphosphate contacts are provided by residues 150 to 151 (AA), Asn178, and Glu373. Asn178 serves as a coordination point for Mg(2+).

It belongs to the transketolase family. DXPS subfamily. In terms of assembly, homodimer. It depends on Mg(2+) as a cofactor. Requires thiamine diphosphate as cofactor.

The enzyme catalyses D-glyceraldehyde 3-phosphate + pyruvate + H(+) = 1-deoxy-D-xylulose 5-phosphate + CO2. The protein operates within metabolic intermediate biosynthesis; 1-deoxy-D-xylulose 5-phosphate biosynthesis; 1-deoxy-D-xylulose 5-phosphate from D-glyceraldehyde 3-phosphate and pyruvate: step 1/1. Functionally, catalyzes the acyloin condensation reaction between C atoms 2 and 3 of pyruvate and glyceraldehyde 3-phosphate to yield 1-deoxy-D-xylulose-5-phosphate (DXP). This chain is 1-deoxy-D-xylulose-5-phosphate synthase, found in Chlamydia caviae (strain ATCC VR-813 / DSM 19441 / 03DC25 / GPIC) (Chlamydophila caviae).